A 591-amino-acid polypeptide reads, in one-letter code: Laccase (591 aa).

A signal peptide spans 1 to 20 (MPSFFRALFSGLIASQLSWA). Plastocyanin-like domains follow at residues 66–189 (VRQY…IQID) and 198–356 (IDLG…HPTN). The N-linked (GlcNAc...) asparagine glycan is linked to N121. Residues H126, H128, H171, and H173 each contribute to the Cu cation site. 2 disulfide bridges follow: C147/C571 and C332/C366. N-linked (GlcNAc...) asparagine glycans are attached at residues N234, N242, N265, and N323. 2 N-linked (GlcNAc...) asparagine glycosylation sites follow: N407 and N425. The Plastocyanin-like 3 domain occupies 416–551 (GHPITQYVIN…AGLGNTFLEQ (136 aa)). Cu cation is bound by residues H463, H466, H468, H533, C534, H535, and H539.

Belongs to the multicopper oxidase family. Cu cation is required as a cofactor.

Its subcellular location is the secreted. It catalyses the reaction 4 hydroquinone + O2 = 4 benzosemiquinone + 2 H2O. Lignin degradation and detoxification of lignin-derived products. The protein is Laccase (LAC-1) of Cryphonectria parasitica (Chestnut blight fungus).